The chain runs to 821 residues: MNGHMSNRSSGYGVYPSQLNGYGSSPPYSQMDREHSSRTSAKALYEQRKNYARDSVSSVSDVSQYRVEHLTTFVLDRKDAMITVEDGIRKLKLLDAKGKVWTQDMILQVDDRAVSLIDLESKNELENFPLNTISHCQAVVHACSYDSILALVCKEPTQSKPDLHLFQCDEVKANLISEDIESAISDSKGGKQKRRPEALRMIAKADPGIPPPPRAPAPVPPGTVTQVDVRSRVAAWSAWAADQGDFEKPRQYHEQEETPEMMAARIDRDVQILNHILDDIEFFITKLQKAAEAFSELSKRKKSKKSKRKGPGEGVLTLRAKPPPPDEFVDCFQKFKHGFNLLAKLKSHIQNPSASDLVHFLFTPLNMVVQATGGPELASSVLSPLLTKDTVDFLNYTATAEERKLWMSLGDSWVKVRAEWPKEQFIPPYVPRFRNGWEPPMLNFMGAPTEQDMYQLAESVANAEHQRKQDSKRLSTEHSNVSDYPPADGYAYSSSMYHRGPHADHGEAAMPFKSTPNHQVDRNYDAVKTQPKKYAKSKYDFVARNSSELSVMKDDVLEILDDRRQWWKVRNASGDSGFVPNNILDIMRTPESGVGRADPPYTHTIQKQRTEYGLRSADTPSAPSPPPTPAPVPVPLPPSVPAPVSVPKVPANVTRQNSSSSDSGGSIVRDSQRYKQLPVDRRKSQMEEVQDELFQRLTIGRSAAQRKFHVPRQNVPVINITYDSSPEEVKTWLQSKGFNPVTVNSLGVLNGAQLFSLNKDELRSVCPEGARVFNQITVQKAALEDSNGSSELQEIMRRRQEKISAAASDSGVESFDEGSSH.

Polar residues-rich tracts occupy residues 1 to 10 (MNGHMSNRSS) and 17 to 28 (SQLNGYGSSPPY). The interval 1–39 (MNGHMSNRSSGYGVYPSQLNGYGSSPPYSQMDREHSSRT) is disordered. Position 58 is a phosphoserine (S58). In terms of domain architecture, PTB spans 64 to 194 (QYRVEHLTTF…SDSKGGKQKR (131 aa)). Disordered stretches follow at residues 204–224 (KADPGIPPPPRAPAPVPPGTV), 295–320 (SELSKRKKSKKSKRKGPGEGVLTLRA), and 461–525 (ANAE…RNYD). The span at 208 to 221 (GIPPPPRAPAPVPP) shows a compositional bias: pro residues. The residue at position 223 (T223) is a Phosphothreonine. Residues 299–309 (KRKKSKKSKRK) show a composition bias toward basic residues. Phosphothreonine is present on T317. Residues 464–476 (EHQRKQDSKRLST) are compositionally biased toward basic and acidic residues. The residue at position 475 (S475) is a Phosphoserine. Residues 530–589 (QPKKYAKSKYDFVARNSSELSVMKDDVLEILDDRRQWWKVRNASGDSGFVPNNILDIMRT) enclose the SH3 domain. The interval 610 to 683 (TEYGLRSADT…YKQLPVDRRK (74 aa)) is disordered. Over residues 622-641 (APSPPPTPAPVPVPLPPSVP) the composition is skewed to pro residues. S624 is modified (phosphoserine; by MAPK). The residue at position 628 (T628) is a Phosphothreonine; by MAPK. Low complexity predominate over residues 642 to 651 (APVSVPKVPA). The effector region stretch occupies residues 648 to 821 (KVPANVTRQN…VESFDEGSSH (174 aa)). Phosphoserine occurs at positions 658 and 661. Residues 670–683 (DSQRYKQLPVDRRK) are compositionally biased toward basic and acidic residues. Residues 679-697 (VDRRKSQMEEVQDELFQRL) form an amphipathic helix region. S684 carries the post-translational modification Phosphoserine. 4 helix bundle regions span residues 717–737 (VINITYDSSPEEVKTWLQSKG), 751–756 (GAQLFS), 761–766 (ELRSVC), and 765–784 (VCPEGARVFNQITVQKAALE). The interval 800–821 (QEKISAAASDSGVESFDEGSSH) is disordered. 2 positions are modified to phosphoserine: S810 and S814.

The protein belongs to the EPS8 family. As to quaternary structure, homodimer. Part of a complex consisting of ABI1, EPS8 and SOS1. Interacts with BAIAP2. Interacts with SHB and LANCL1. Interacts with EGFR; mediates EPS8 phosphorylation. Interacts with MYO15A and WHRN. In terms of processing, ubiquitinated by the SCF(FBXW5) E3 ubiquitin-protein ligase complex during G2 phase, leading to its transient degradation and subsequent cell shape changes required to allow mitotic progression. Reappears at the midzone of dividing cells. Post-translationally, phosphorylation at Ser-624 and Thr-628 by MAPK following BDNF treatment promotes removal from actin and filopodia formation. Phosphorylated by several receptor tyrosine kinases. As to expression, expressed in neuronal cell body and neurites, and prominently enriched in the axonal growth cone. Expressed at the tips of cochlear hair cells stereocilia.

The protein resides in the cytoplasm. It is found in the cell cortex. It localises to the cell projection. Its subcellular location is the ruffle membrane. The protein localises to the growth cone. The protein resides in the stereocilium. It is found in the synapse. It localises to the synaptosome. Signaling adapter that controls various cellular protrusions by regulating actin cytoskeleton dynamics and architecture. Depending on its association with other signal transducers, can regulate different processes. Together with SOS1 and ABI1, forms a trimeric complex that participates in transduction of signals from Ras to Rac by activating the Rac-specific guanine nucleotide exchange factor (GEF) activity. Acts as a direct regulator of actin dynamics by binding actin filaments and has both barbed-end actin filament capping and actin bundling activities depending on the context. Displays barbed-end actin capping activity when associated with ABI1, thereby regulating actin-based motility process: capping activity is auto-inhibited and inhibition is relieved upon ABI1 interaction. Also shows actin bundling activity when associated with BAIAP2, enhancing BAIAP2-dependent membrane extensions and promoting filopodial protrusions. Involved in the regulation of processes such as axonal filopodia growth, stereocilia length, dendritic cell migration and cancer cell migration and invasion. Acts as a regulator of axonal filopodia formation in neurons: in the absence of neurotrophic factors, negatively regulates axonal filopodia formation via actin-capping activity. In contrast, it is phosphorylated in the presence of BDNF leading to inhibition of its actin-capping activity and stimulation of filopodia formation. Component of a complex with WHRN and MYO15A that localizes at stereocilia tips and is required for elongation of the stereocilia actin core. Indirectly involved in cell cycle progression; its degradation following ubiquitination being required during G2 phase to promote cell shape changes. The protein is Epidermal growth factor receptor kinase substrate 8 (Eps8) of Mus musculus (Mouse).